Consider the following 88-residue polypeptide: Cytochrome c oxidase subunit 6B2 (88 aa).

The region spanning T29–W75 is the CHCH domain. Residues C32–C42 carry the Cx9C motif motif. 2 disulfides stabilise this stretch: C32–C67 and C42–C56. Positions C56 to C67 match the Cx10C motif motif.

It belongs to the cytochrome c oxidase subunit 6B family. In terms of assembly, component of the cytochrome c oxidase (complex IV, CIV), a multisubunit enzyme composed of 14 subunits. The complex is composed of a catalytic core of 3 subunits MT-CO1, MT-CO2 and MT-CO3, encoded in the mitochondrial DNA, and 11 supernumerary subunits COX4I1 (or COX4I2), COX5A, COX5B, COX6A2 (or COX6A1), COX6B1 (or COX6B2), COX6C, COX7A1 (or COX7A2), COX7B, COX7C, COX8B and NDUFA4, which are encoded in the nuclear genome. The complex exists as a monomer or a dimer and forms supercomplexes (SCs) in the inner mitochondrial membrane with NADH-ubiquinone oxidoreductase (complex I, CI) and ubiquinol-cytochrome c oxidoreductase (cytochrome b-c1 complex, complex III, CIII), resulting in different assemblies (supercomplex SCI(1)III(2)IV(1) and megacomplex MCI(2)III(2)IV(2)). As to expression, testis specific.

It is found in the mitochondrion inner membrane. It functions in the pathway energy metabolism; oxidative phosphorylation. Component of the cytochrome c oxidase, the last enzyme in the mitochondrial electron transport chain which drives oxidative phosphorylation. The respiratory chain contains 3 multisubunit complexes succinate dehydrogenase (complex II, CII), ubiquinol-cytochrome c oxidoreductase (cytochrome b-c1 complex, complex III, CIII) and cytochrome c oxidase (complex IV, CIV), that cooperate to transfer electrons derived from NADH and succinate to molecular oxygen, creating an electrochemical gradient over the inner membrane that drives transmembrane transport and the ATP synthase. Cytochrome c oxidase is the component of the respiratory chain that catalyzes the reduction of oxygen to water. Electrons originating from reduced cytochrome c in the intermembrane space (IMS) are transferred via the dinuclear copper A center (CU(A)) of subunit 2 and heme A of subunit 1 to the active site in subunit 1, a binuclear center (BNC) formed by heme A3 and copper B (CU(B)). The BNC reduces molecular oxygen to 2 water molecules using 4 electrons from cytochrome c in the IMS and 4 protons from the mitochondrial matrix. In Bos taurus (Bovine), this protein is Cytochrome c oxidase subunit 6B2 (COX6B2).